The primary structure comprises 351 residues: Thiamine-phosphate synthase (351 aa).

The unknown stretch occupies residues 1–128 (MKNPNIIQPE…SKIASEIRYE (128 aa)). Positions 129 to 351 (IYTLEIEILN…IIIKELSHEN (223 aa)) are thiamine-phosphate synthase. Residues 180 to 184 (QHRFK) and Asn212 each bind 4-amino-2-methyl-5-(diphosphooxymethyl)pyrimidine. Mg(2+) is bound by residues Asn213 and Asp232. 4-amino-2-methyl-5-(diphosphooxymethyl)pyrimidine is bound at residue Ser251. Residue 277–279 (TLT) coordinates 2-[(2R,5Z)-2-carboxy-4-methylthiazol-5(2H)-ylidene]ethyl phosphate. Lys280 contributes to the 4-amino-2-methyl-5-(diphosphooxymethyl)pyrimidine binding site. 2-[(2R,5Z)-2-carboxy-4-methylthiazol-5(2H)-ylidene]ethyl phosphate-binding positions include Gly307 and 327–328 (VS).

The protein belongs to the thiamine-phosphate synthase family.

The enzyme catalyses 2-[(2R,5Z)-2-carboxy-4-methylthiazol-5(2H)-ylidene]ethyl phosphate + 4-amino-2-methyl-5-(diphosphooxymethyl)pyrimidine + 2 H(+) = thiamine phosphate + CO2 + diphosphate. It catalyses the reaction 2-(2-carboxy-4-methylthiazol-5-yl)ethyl phosphate + 4-amino-2-methyl-5-(diphosphooxymethyl)pyrimidine + 2 H(+) = thiamine phosphate + CO2 + diphosphate. It carries out the reaction 4-methyl-5-(2-phosphooxyethyl)-thiazole + 4-amino-2-methyl-5-(diphosphooxymethyl)pyrimidine + H(+) = thiamine phosphate + diphosphate. It participates in cofactor biosynthesis; thiamine diphosphate biosynthesis; thiamine phosphate from 4-amino-2-methyl-5-diphosphomethylpyrimidine and 4-methyl-5-(2-phosphoethyl)-thiazole: step 1/1. Condenses 4-methyl-5-(beta-hydroxyethyl)thiazole monophosphate (THZ-P) and 2-methyl-4-amino-5-hydroxymethyl pyrimidine pyrophosphate (HMP-PP) to form thiamine monophosphate (TMP). The polypeptide is Thiamine-phosphate synthase (Prochlorococcus marinus subsp. pastoris (strain CCMP1986 / NIES-2087 / MED4)).